The following is a 3421-amino-acid chain: Hemocyanin 2 (3421 aa).

The N-terminal stretch at 1 to 19 (MWTILALLTATLLFEGAFS) is a signal peptide. Positions 20 to 442 (VDTVVRKNVD…KPPVPVAQAN (423 aa)) are functional unit a (wall). Position 62 (histidine 62) interacts with Cu cation. Cysteine 68 and cysteine 78 are joined by a disulfide. Positions 79 to 81 (CLH) form a cross-link, 2'-(S-cysteinyl)-histidine (Cys-His). Histidine 81, histidine 90, histidine 200, histidine 204, and histidine 231 together coordinate Cu cation. Disulfide bonds link cysteine 190–cysteine 257 and cysteine 344–cysteine 356. Asparagine 408 is a glycosylation site (N-linked (GlcNAc...) asparagine). Positions 443-853 (LAVRKNINDL…RADAKDFGHS (411 aa)) are functional unit b (wall). Histidine 483 contacts Cu cation. A disulfide bridge connects residues cysteine 489 and cysteine 500. Positions 501–503 (CVH) form a cross-link, 2'-(S-cysteinyl)-histidine (Cys-His). Positions 503, 512, 622, 626, 653, and 894 each coordinate Cu cation. A disulfide bridge links cysteine 612 with cysteine 678. The stretch at 632–673 (SEKYSMSSLHYTAFDPIFYLHHSNVDRLWAIWQALQIRRGKS) is one WD 1 repeat. A functional unit c (wall) region spans residues 854–1275 (RKIRKAVDSL…DEYREAVTSA (422 aa)). Cysteine 900 and cysteine 911 are disulfide-bonded. Positions 912–914 (CVH) form a cross-link, 2'-(S-cysteinyl)-histidine (Cys-His). Cu cation-binding residues include histidine 914, histidine 923, histidine 1033, histidine 1037, and histidine 1063. 2 cysteine pairs are disulfide-bonded: cysteine 1023–cysteine 1090 and cysteine 1180–cysteine 1187. The WD 2 repeat unit spans residues 1043–1084 (NEPYSMSSLRYTTYDPIFFLHRSNTDRLWAIWQALQKYRGKP). Residue asparagine 1183 is glycosylated (N-linked (GlcNAc...) asparagine). A functional unit d (wall) region spans residues 1276–1685 (SHIRKNIRDL…NIYYDGLSQH (410 aa)). Histidine 1313 contacts Cu cation. Cysteine 1319 and cysteine 1328 form a disulfide bridge. A cross-link (2'-(S-cysteinyl)-histidine (Cys-His)) is located at residues 1329-1331 (CVH). Residues histidine 1331 and histidine 1340 each contribute to the Cu cation site. A WD 3 repeat occupies 1387–1425 (QTFDPNPFFRGHIAFENAVTSRDPQPELWDNKDFYENVM). 2 disulfides stabilise this stretch: cysteine 1434–cysteine 1501 and cysteine 1590–cysteine 1599. Positions 1444, 1448, and 1475 each coordinate Cu cation. One copy of the WD 4 repeat lies at 1454–1495 (RAKYSLSSLDYTAFDPVFFLHHANVDRIWAIWQDLQRYRKKP). Asparagine 1653 carries an N-linked (GlcNAc...) asparagine glycan. The interval 1686-2102 (NLVRKEVSSL…HGINVRHVGR (417 aa)) is functional unit e (wall). Residue histidine 1726 participates in Cu cation binding. Cysteine 1732 and cysteine 1743 form a disulfide bridge. The segment at residues 1744 to 1746 (CLH) is a cross-link (2'-(S-cysteinyl)-histidine (Cys-His)). Residues histidine 1746, histidine 1755, histidine 1868, histidine 1872, and histidine 1899 each coordinate Cu cation. Cystine bridges form between cysteine 1858-cysteine 1925 and cysteine 2014-cysteine 2020. One copy of the WD 5 repeat lies at 1878–1919 (SKTHSIGHLHYASYDPLFYIHHSQTDRIWAIWQALQEHRGLS). The functional unit f (wall) stretch occupies residues 2103-2522 (NRIRMELSEL…DDHGSDHIAG (420 aa)). Cu cation is bound at residue histidine 2143. Cysteine 2149 and cysteine 2159 are disulfide-bonded. The segment at residues 2160–2162 (CIH) is a cross-link (2'-(S-cysteinyl)-histidine (Cys-His)). Cu cation-binding residues include histidine 2162, histidine 2171, histidine 2281, histidine 2285, and histidine 2312. Residues 2168-2204 (PHWHRLYTLQMDMALLSHGSAVAIPYWDWTKPISKLP) form a WD 6 repeat. Disulfide bonds link cysteine 2271-cysteine 2338 and cysteine 2425-cysteine 2431. The tract at residues 2523 to 2929 (SGVRKDVTSL…SGHDHSERHD (407 aa)) is functional unit g (internal arc). Histidine 2563 serves as a coordination point for Cu cation. A disulfide bond links cysteine 2569 and cysteine 2579. The 2'-(S-cysteinyl)-histidine (Cys-His) cross-link spans 2580–2582 (CTH). Cu cation contacts are provided by histidine 2582, histidine 2591, histidine 2691, histidine 2695, and histidine 2722. Disulfide bonds link cysteine 2681/cysteine 2748 and cysteine 2835/cysteine 2841. The WD 7 repeat unit spans residues 2700-2742 (GHTPYGMSSLEYTAYDPLFYLHHSNTDRIWAIWQALQKYRGFQ). Residues 2898 to 2927 (PSDRIKSPTIEHHGGDHHGGDTSGHDHSER) are disordered. A functional unit h (internal slab) region spans residues 2930 to 3421 (GFFRKEVGSL…VRIHIHIEDE (492 aa)). Histidine 2970 is a Cu cation binding site. A disulfide bond links cysteine 2976 and cysteine 2986. Residues 2987 to 2989 (CVH) constitute a cross-link (2'-(S-cysteinyl)-histidine (Cys-His)). 5 residues coordinate Cu cation: histidine 2989, histidine 2998, histidine 3099, histidine 3103, and histidine 3130. Intrachain disulfides connect cysteine 3089–cysteine 3156 and cysteine 3374–cysteine 3407. The WD 8 repeat unit spans residues 3109 to 3150 (TETYSMSSLAFSAYDPVFMILHSGLDRLWIIWQELQKLRKKP).

Belongs to the tyrosinase family. Hemocyanin subfamily. Homo-didecamer and homo-multidecamer. Probably N-glycosylated. Asn-2489 is buried deeply in the protein which make it inaccessible for sugar attachment. Hemolymph.

The protein resides in the secreted. Its subcellular location is the extracellular space. In terms of biological role, hemocyanins are copper-containing oxygen carriers occurring freely dissolved in the hemolymph of many mollusks and arthropods. The protein is Hemocyanin 2 of Megathura crenulata (Giant keyhole limpet).